We begin with the raw amino-acid sequence, 264 residues long: Diphthine synthase (264 aa).

Residues Leu-9, Asp-84, Val-87, Ser-112–Ile-113, Leu-164, Ala-207, and His-232 contribute to the S-adenosyl-L-methionine site.

This sequence belongs to the diphthine synthase family. In terms of assembly, homodimer.

The catalysed reaction is 2-[(3S)-amino-3-carboxypropyl]-L-histidyl-[translation elongation factor 2] + 3 S-adenosyl-L-methionine = diphthine-[translation elongation factor 2] + 3 S-adenosyl-L-homocysteine + 3 H(+). Its pathway is protein modification; peptidyl-diphthamide biosynthesis. S-adenosyl-L-methionine-dependent methyltransferase that catalyzes the trimethylation of the amino group of the modified target histidine residue in translation elongation factor 2 (EF-2), to form an intermediate called diphthine. The three successive methylation reactions represent the second step of diphthamide biosynthesis. The protein is Diphthine synthase of Methanothermobacter thermautotrophicus (strain ATCC 29096 / DSM 1053 / JCM 10044 / NBRC 100330 / Delta H) (Methanobacterium thermoautotrophicum).